The primary structure comprises 207 residues: Large ribosomal subunit protein uL4 (207 aa).

Residues 43-85 (SRRQGTHDTKGRSEVRGGGRKPWKQKGTGRARQGSIRSPQWVG) are disordered. Positions 47-59 (GTHDTKGRSEVRG) are enriched in basic and acidic residues. Residues 60 to 71 (GGRKPWKQKGTG) show a composition bias toward basic residues.

Belongs to the universal ribosomal protein uL4 family. Part of the 50S ribosomal subunit.

Functionally, one of the primary rRNA binding proteins, this protein initially binds near the 5'-end of the 23S rRNA. It is important during the early stages of 50S assembly. It makes multiple contacts with different domains of the 23S rRNA in the assembled 50S subunit and ribosome. In terms of biological role, forms part of the polypeptide exit tunnel. The protein is Large ribosomal subunit protein uL4 of Exiguobacterium sibiricum (strain DSM 17290 / CCUG 55495 / CIP 109462 / JCM 13490 / 255-15).